The following is a 525-amino-acid chain: DEAD-box ATP-dependent RNA helicase CshA (525 aa).

Residues 2 to 30 (TTFRELGLSDSLLQSVESMGFEEATPIQA) carry the Q motif motif. Residues 33-203 (IPHALQGKDI…ERFMTEPQHI (171 aa)) form the Helicase ATP-binding domain. Residue 46–53 (AQTGTGKT) participates in ATP binding. Positions 151 to 154 (DEAD) match the DEAD box motif. The 161-residue stretch at 214–374 (NIQQFYLEVQ…RMDAPTLDEA (161 aa)) folds into the Helicase C-terminal domain. A disordered region spans residues 428-525 (TTPIALTSEP…RKHHSRKPQA (98 aa)). The span at 458–503 (DGNRNRSRDGRGGDGRNRDRNRDGRNRDGNRDRNRDGGNRGRRGEG) shows a compositional bias: basic and acidic residues. Over residues 515 to 525 (ERKHHSRKPQA) the composition is skewed to basic residues.

The protein belongs to the DEAD box helicase family. CshA subfamily. Oligomerizes, may be a member of the RNA degradosome.

The protein resides in the cytoplasm. It carries out the reaction ATP + H2O = ADP + phosphate + H(+). Its function is as follows. DEAD-box RNA helicase possibly involved in RNA degradation. Unwinds dsRNA in both 5'- and 3'-directions, has RNA-dependent ATPase activity. The chain is DEAD-box ATP-dependent RNA helicase CshA from Bacillus cereus (strain ATCC 10987 / NRS 248).